Consider the following 74-residue polypeptide: Protein DELETION OF SUV3 SUPPRESSOR 1(I) (74 aa).

The interval 35-74 (EKEEVKEVSQQWEDDWDDDDVNDDFSRQLRKELENGTDKK) is disordered. Acidic residues predominate over residues 46 to 57 (WEDDWDDDDVND). The segment covering 58–74 (DFSRQLRKELENGTDKK) has biased composition (basic and acidic residues).

It belongs to the DSS1/SEM1 family. In terms of assembly, part of the 26S proteasome. Interacts with BRCA2A and BRCA2B. Interacts with UCH1 and UCH2. Can form a tripartite complex with both RAD51 and BRCA2B or both DMC1 and BRCA2B.

Functionally, subunit of the 26S proteasome which plays a role in ubiquitin-dependent proteolysis. The protein is Protein DELETION OF SUV3 SUPPRESSOR 1(I) of Arabidopsis thaliana (Mouse-ear cress).